A 460-amino-acid chain; its full sequence is 7-cyano-7-deazaguanine synthase 2 (460 aa).

The For GATase activity role is filled by cysteine 2. The Glutamine amidotransferase type-2 domain maps to 2–225; the sequence is CSVTGVLIIK…PYSIVEVNDN (224 aa). 245 to 255 is a binding site for ATP; it reads ASGGLDSTVAA. 4 residues coordinate Zn(2+): cysteine 426, cysteine 434, cysteine 437, and cysteine 440.

It belongs to the QueC family. The cofactor is Zn(2+).

It catalyses the reaction 7-carboxy-7-deazaguanine + NH4(+) + ATP = 7-cyano-7-deazaguanine + ADP + phosphate + H2O + H(+). The protein operates within purine metabolism; 7-cyano-7-deazaguanine biosynthesis. Functionally, catalyzes the ATP-dependent conversion of 7-carboxy-7-deazaguanine (CDG) to 7-cyano-7-deazaguanine (preQ(0)). The sequence is that of 7-cyano-7-deazaguanine synthase 2 (queC2) from Sulfurisphaera tokodaii (strain DSM 16993 / JCM 10545 / NBRC 100140 / 7) (Sulfolobus tokodaii).